The following is a 294-amino-acid chain: MFRGVGTAIVTPFKNGELDLESYERLVRYQLENGVNALIVLGTTGESPTVNEDEREKLVSRTLEIVDGKIPVIVGAGTNSTEKTLKLVKQAEKLGANGVLVVTPYYNKPTQEGLYQHYKYISERTDLGIVVYNVPGRTGVNVLPETAARIAADLKNVVGIKEANPDIDQIDRTVSLTKQARSDFMVWSGNDDRTFYLLCAGGDGVISVVSNVAPKQMVELCAEYFSGNLEKSREVHRKLRPLMKALFAETNPIPVKAALNLMGFIENELRLPLVPASEKTMELLRNVLKESGLL.

T44 lines the pyruvate pocket. Y132 (proton donor/acceptor) is an active-site residue. Catalysis depends on K161, which acts as the Schiff-base intermediate with substrate. Pyruvate is bound at residue I206.

Belongs to the DapA family. As to quaternary structure, homotetramer; dimer of dimers.

It is found in the cytoplasm. It catalyses the reaction L-aspartate 4-semialdehyde + pyruvate = (2S,4S)-4-hydroxy-2,3,4,5-tetrahydrodipicolinate + H2O + H(+). It participates in amino-acid biosynthesis; L-lysine biosynthesis via DAP pathway; (S)-tetrahydrodipicolinate from L-aspartate: step 3/4. In terms of biological role, catalyzes the condensation of (S)-aspartate-beta-semialdehyde [(S)-ASA] and pyruvate to 4-hydroxy-tetrahydrodipicolinate (HTPA). In Thermotoga petrophila (strain ATCC BAA-488 / DSM 13995 / JCM 10881 / RKU-1), this protein is 4-hydroxy-tetrahydrodipicolinate synthase.